We begin with the raw amino-acid sequence, 763 residues long: Phosphoglycerol transferase I (763 aa).

The next 4 helical transmembrane spans lie at 1–21, 26–46, 77–97, and 108–128; these read MSEL…AWKA, WWFA…ITLY, ILPG…LGWI, and FGYS…SPAF.

Belongs to the OpgB family.

Its subcellular location is the cell inner membrane. It carries out the reaction a phosphatidylglycerol + a membrane-derived-oligosaccharide D-glucose = a 1,2-diacyl-sn-glycerol + a membrane-derived-oligosaccharide 6-(glycerophospho)-D-glucose.. The protein operates within glycan metabolism; osmoregulated periplasmic glucan (OPG) biosynthesis. Transfers a phosphoglycerol residue from phosphatidylglycerol to the membrane-bound nascent glucan backbones. In Escherichia fergusonii (strain ATCC 35469 / DSM 13698 / CCUG 18766 / IAM 14443 / JCM 21226 / LMG 7866 / NBRC 102419 / NCTC 12128 / CDC 0568-73), this protein is Phosphoglycerol transferase I.